The following is a 344-amino-acid chain: UDP-3-O-acylglucosamine N-acyltransferase (344 aa).

His-248 (proton acceptor) is an active-site residue.

It belongs to the transferase hexapeptide repeat family. LpxD subfamily. In terms of assembly, homotrimer.

It carries out the reaction a UDP-3-O-[(3R)-3-hydroxyacyl]-alpha-D-glucosamine + a (3R)-hydroxyacyl-[ACP] = a UDP-2-N,3-O-bis[(3R)-3-hydroxyacyl]-alpha-D-glucosamine + holo-[ACP] + H(+). The protein operates within bacterial outer membrane biogenesis; LPS lipid A biosynthesis. Its function is as follows. Catalyzes the N-acylation of UDP-3-O-acylglucosamine using 3-hydroxyacyl-ACP as the acyl donor. Is involved in the biosynthesis of lipid A, a phosphorylated glycolipid that anchors the lipopolysaccharide to the outer membrane of the cell. This chain is UDP-3-O-acylglucosamine N-acyltransferase, found in Prochlorococcus marinus (strain MIT 9515).